The following is a 467-amino-acid chain: Fumarate hydratase class II (467 aa).

Residues 98–100 (SGT), R126, 129–132 (HPND), 139–141 (SSN), and T187 contribute to the substrate site. The active-site Proton donor/acceptor is the H188. Residue S318 is part of the active site. Substrate-binding positions include S319 and 324–326 (KVN).

The protein belongs to the class-II fumarase/aspartase family. Fumarase subfamily. As to quaternary structure, homotetramer.

Its subcellular location is the cytoplasm. The catalysed reaction is (S)-malate = fumarate + H2O. It functions in the pathway carbohydrate metabolism; tricarboxylic acid cycle; (S)-malate from fumarate: step 1/1. Functionally, involved in the TCA cycle. Catalyzes the stereospecific interconversion of fumarate to L-malate. This Escherichia coli O157:H7 protein is Fumarate hydratase class II.